Consider the following 231-residue polypeptide: Tol-Pal system protein TolQ (231 aa).

3 consecutive transmembrane segments (helical) span residues 20–40, 134–154, and 176–196; these read IVVQ…WIMI, FLAT…VWGI, and IAEA…AVIA.

Belongs to the ExbB/TolQ family. As to quaternary structure, the Tol-Pal system is composed of five core proteins: the inner membrane proteins TolA, TolQ and TolR, the periplasmic protein TolB and the outer membrane protein Pal. They form a network linking the inner and outer membranes and the peptidoglycan layer.

The protein resides in the cell inner membrane. In terms of biological role, part of the Tol-Pal system, which plays a role in outer membrane invagination during cell division and is important for maintaining outer membrane integrity. The sequence is that of Tol-Pal system protein TolQ from Pseudomonas aeruginosa (strain ATCC 15692 / DSM 22644 / CIP 104116 / JCM 14847 / LMG 12228 / 1C / PRS 101 / PAO1).